The chain runs to 1693 residues: uncharacterized protein (1693 aa).

WD repeat units follow at residues 1008 to 1042, 1053 to 1083, 1094 to 1124, 1135 to 1165, 1176 to 1206, 1217 to 1247, 1258 to 1288, 1299 to 1329, 1340 to 1370, 1381 to 1411, 1422 to 1452, 1463 to 1493, 1504 to 1534, 1545 to 1575, 1586 to 1616, and 1627 to 1657; these read HHEGPVTVLRISPSMENTPPLVLTATTNGIAYLWS, GHQEAITALDWSADGQYFATASADHTVKLWQ, GHEDWVRSVHFSPHHQFLVTSGQDNTARIWN, GHADWVRNAEFNCHGQILLTASRDGTARLWD, GHTSWVRNAQFSPDGQWIVTCSADGTARLWD, GHQNWVNNALWSPDGQHIITSSSDGTARVWS, GHDHNIHGARFSLDGQKIVTYSTDNTARLWT, GHQKEVYDADFSADGRFVFTVSADQTARQWD, GHSHWVRNAHFNPKGDRLLTVSRDKTARLWT, DHQGWVREGQFSPDGQWIVTGSADKTAQLWN, GHQDAVLNVRFSPDSQYIVTASKDGTARVWN, HYEKNIFAAEFSADGQFIVTASDDNTAGIWE, GHEGPVYFAQFSADSRYILTASVDNTARIWD, GHQSIVYQARFSPEGNLIATVSADHTARLWD, GHQGLVGTVDWSPDGQMLVTASNDGTARLWD, and GHGNWVRSAEFSPDGRWVLTSSADGTAKLWP.

This is an uncharacterized protein from Synechocystis sp. (strain ATCC 27184 / PCC 6803 / Kazusa).